A 126-amino-acid polypeptide reads, in one-letter code: Large ribosomal subunit protein eL32 (126 aa).

It belongs to the eukaryotic ribosomal protein eL32 family. In terms of assembly, part of the 50S ribosomal subunit.

In Thermococcus kodakarensis (strain ATCC BAA-918 / JCM 12380 / KOD1) (Pyrococcus kodakaraensis (strain KOD1)), this protein is Large ribosomal subunit protein eL32 (rpl32e).